The sequence spans 715 residues: Polyribonucleotide nucleotidyltransferase (715 aa).

Residues aspartate 488 and aspartate 494 each contribute to the Mg(2+) site. A KH domain is found at 555-614 (PRIEVMHIPTDKIRDVIGSGGKVIREIVEKTGAKINIEDDGTVKIASSNAKEIEAAKKWI). One can recognise an S1 motif domain in the interval 624-692 (GEIYEGTVVK…ERGKVRLSMK (69 aa)).

Belongs to the polyribonucleotide nucleotidyltransferase family. Requires Mg(2+) as cofactor.

It is found in the cytoplasm. It carries out the reaction RNA(n+1) + phosphate = RNA(n) + a ribonucleoside 5'-diphosphate. In terms of biological role, involved in mRNA degradation. Catalyzes the phosphorolysis of single-stranded polyribonucleotides processively in the 3'- to 5'-direction. The chain is Polyribonucleotide nucleotidyltransferase from Mesorhizobium japonicum (strain LMG 29417 / CECT 9101 / MAFF 303099) (Mesorhizobium loti (strain MAFF 303099)).